A 262-amino-acid chain; its full sequence is Shikimate dehydrogenase (NADP(+)) (262 aa).

Shikimate-binding positions include 15-17 and Thr62; that span reads SRS. Residue Lys66 is the Proton acceptor of the active site. Glu78 is an NADP(+) binding site. Shikimate contacts are provided by Asn87 and Asp102. Residues 126 to 130, 150 to 155, and Met214 each bind NADP(+); these read GAGGA and NRTLAR. Tyr216 is a shikimate binding site. An NADP(+)-binding site is contributed by Gly236.

Belongs to the shikimate dehydrogenase family. In terms of assembly, homodimer.

It carries out the reaction shikimate + NADP(+) = 3-dehydroshikimate + NADPH + H(+). The protein operates within metabolic intermediate biosynthesis; chorismate biosynthesis; chorismate from D-erythrose 4-phosphate and phosphoenolpyruvate: step 4/7. In terms of biological role, involved in the biosynthesis of the chorismate, which leads to the biosynthesis of aromatic amino acids. Catalyzes the reversible NADPH linked reduction of 3-dehydroshikimate (DHSA) to yield shikimate (SA). This is Shikimate dehydrogenase (NADP(+)) from Acinetobacter baumannii (strain AB0057).